A 329-amino-acid chain; its full sequence is DNA-directed RNA polymerase subunit alpha (329 aa).

The tract at residues 1 to 235 is alpha N-terminal domain (alpha-NTD); the sequence is MLGSVTDFLK…EQLDAFVDLR (235 aa). An alpha C-terminal domain (alpha-CTD) region spans residues 249-329; it reads FDPILLRPVD…NWPPASLADN (81 aa).

The protein belongs to the RNA polymerase alpha chain family. In terms of assembly, homodimer. The RNAP catalytic core consists of 2 alpha, 1 beta, 1 beta' and 1 omega subunit. When a sigma factor is associated with the core the holoenzyme is formed, which can initiate transcription.

The catalysed reaction is RNA(n) + a ribonucleoside 5'-triphosphate = RNA(n+1) + diphosphate. Functionally, DNA-dependent RNA polymerase catalyzes the transcription of DNA into RNA using the four ribonucleoside triphosphates as substrates. This is DNA-directed RNA polymerase subunit alpha from Tolumonas auensis (strain DSM 9187 / NBRC 110442 / TA 4).